The chain runs to 57 residues: UPF0391 membrane protein RPA3505 (57 aa).

The next 2 helical transmembrane spans lie at 4–24 (WVVT…GGIA) and 30–50 (IAKI…VISI).

It belongs to the UPF0391 family.

Its subcellular location is the cell membrane. This Rhodopseudomonas palustris (strain ATCC BAA-98 / CGA009) protein is UPF0391 membrane protein RPA3505.